Consider the following 327-residue polypeptide: MSKKVKVAVTGAAGQIGYALLFRIASGQMFGPDTAVELQLLELEQAIPAAKGVIMELDDCAFPLLEKVSVSSNIDEAFRDINWALLVGSVPRKAGMERGDLLKINGGIFTTQGKAIEKNAASDVRVLVVGNPCNTNALIAMNNAKGVPSDRWFAMTGLDENRAKTQLAQKAGVLVKDVSNVAIWGNHSATQYPDFFNAKVNGKPATDVISDHDWLKGDFISTVQKRGAAIIAARGASSAASAANAVVDTVHNIVTPTKPGDWFSAACHSNGEYGVDKGLIFGYPLKSDGKKVEIVTGLEINAFGKEKFDITHNELKEERNEVKDMLG.

An NAD(+)-binding site is contributed by 11–17 (GAAGQIG). Arginine 92 and arginine 98 together coordinate substrate. Residues asparagine 105, glutamine 112, and 129–131 (VGN) each bind NAD(+). Asparagine 131 and arginine 162 together coordinate substrate. Histidine 187 (proton acceptor) is an active-site residue.

This sequence belongs to the LDH/MDH superfamily. MDH type 2 family.

It carries out the reaction (S)-malate + NAD(+) = oxaloacetate + NADH + H(+). In terms of biological role, catalyzes the reversible oxidation of malate to oxaloacetate. The protein is Malate dehydrogenase of Leptospira biflexa serovar Patoc (strain Patoc 1 / Ames).